The chain runs to 123 residues: Alpha-lactalbumin B/C (123 aa).

One can recognise a C-type lysozyme domain in the interval 1–123 (KQFTKCQLSQ…KLEQWLCEEL (123 aa)). 4 cysteine pairs are disulfide-bonded: Cys6–Cys120, Cys28–Cys111, Cys61–Cys77, and Cys73–Cys91. Residues Lys79, Asp82, Asp84, Asp87, and Asp88 each coordinate Ca(2+).

It belongs to the glycosyl hydrolase 22 family. Lactose synthase (LS) is a heterodimer of a catalytic component, beta1,4-galactosyltransferase (beta4Gal-T1) and a regulatory component, alpha-lactalbumin (LA). Mammary gland specific. Secreted in milk.

It localises to the secreted. Its function is as follows. Regulatory subunit of lactose synthase, changes the substrate specificity of galactosyltransferase in the mammary gland making glucose a good acceptor substrate for this enzyme. This enables LS to synthesize lactose, the major carbohydrate component of milk. In other tissues, galactosyltransferase transfers galactose onto the N-acetylglucosamine of the oligosaccharide chains in glycoproteins. The polypeptide is Alpha-lactalbumin B/C (Equus caballus (Horse)).